We begin with the raw amino-acid sequence, 146 residues long: Large ribosomal subunit protein uL22 (146 aa).

The interval 1-39 (MAETQTTTPKKKAERRAPPPARARKNRPAAPAPGPHASL) is disordered.

Belongs to the universal ribosomal protein uL22 family. Part of the 50S ribosomal subunit.

Its function is as follows. This protein binds specifically to 23S rRNA; its binding is stimulated by other ribosomal proteins, e.g. L4, L17, and L20. It is important during the early stages of 50S assembly. It makes multiple contacts with different domains of the 23S rRNA in the assembled 50S subunit and ribosome. The globular domain of the protein is located near the polypeptide exit tunnel on the outside of the subunit, while an extended beta-hairpin is found that lines the wall of the exit tunnel in the center of the 70S ribosome. This Anaeromyxobacter dehalogenans (strain 2CP-1 / ATCC BAA-258) protein is Large ribosomal subunit protein uL22.